The chain runs to 430 residues: Delta(14)-sterol reductase (430 aa).

The next 6 membrane-spanning stretches (helical) occupy residues 12 to 32 (IGTG…HFLI), 67 to 87 (LAVA…PAEI), 109 to 129 (FLVF…TWWF), 230 to 250 (FVSD…VDAL), 267 to 287 (LGVM…CLQA), and 290 to 310 (LASF…AVQF). NADP(+) is bound by residues Lys323, Arg327, Leu350, Trp355, and 362–363 (NY). 2 helical membrane passes run 349–369 (LLIS…DWIM) and 376–396 (TTGF…ILLL). NADP(+) contacts are provided by residues Asp402, 406–410 (CREKY), and Tyr417.

The protein belongs to the ERG4/ERG24 family.

It is found in the membrane. It carries out the reaction 4,4-dimethyl-5alpha-cholesta-8,24-dien-3beta-ol + NADP(+) = 4,4-dimethyl-5alpha-cholesta-8,14,24-trien-3beta-ol + NADPH + H(+). Its pathway is steroid biosynthesis; zymosterol biosynthesis; zymosterol from lanosterol: step 2/6. Reduces the C14=C15 double bond of 4,4-dimethyl-cholesta-8,14,24-trienol to produce 4,4-dimethyl-cholesta-8,24-dienol. This chain is Delta(14)-sterol reductase (ERG3), found in Ascobolus immersus.